Reading from the N-terminus, the 101-residue chain is MIPGEIIAASGDIELNAGAPTVTLEVSNTGDRPVQVGSHYHFAETNAGLSFDRAAAHGKRLDIPSGTAVRFEPGQTRSVTLIPLAGKREVYGFRQLVMGKL.

This sequence belongs to the urease beta subunit family. In terms of assembly, heterotrimer of UreA (gamma), UreB (beta) and UreC (alpha) subunits. Three heterotrimers associate to form the active enzyme.

Its subcellular location is the cytoplasm. It carries out the reaction urea + 2 H2O + H(+) = hydrogencarbonate + 2 NH4(+). It participates in nitrogen metabolism; urea degradation; CO(2) and NH(3) from urea (urease route): step 1/1. This is Urease subunit beta from Rhizobium etli (strain CIAT 652).